The chain runs to 399 residues: Phospholipase C (399 aa).

Positions 1-28 are cleaved as a signal peptide; the sequence is MNKKKILKFICSAVLSFTLFSGYKSYAW. Residues Trp28, His38, Asp83, His95, His153, Asp157, His163, His175, and Glu179 each coordinate Zn(2+). The region spanning 29–277 is the Zn-dependent PLC domain; it reads DGKVDGTGTH…NEVSGTINTT (249 aa). The tract at residues 275–282 is linker; it reads NTTENSKI. The PLAT domain maps to 283–399; it reads NEIMVVIKTA…DNKTFYINNK (117 aa). Ca(2+)-binding residues include Gly298, Thr299, Asp300, Asp320, Asn321, Gly323, Asn324, Asp325, and Asp363.

This sequence belongs to the bacterial zinc-metallophospholipase C family. It depends on Ca(2+) as a cofactor. Requires Zn(2+) as cofactor.

It localises to the secreted. It catalyses the reaction a 1,2-diacyl-sn-glycero-3-phosphocholine + H2O = phosphocholine + a 1,2-diacyl-sn-glycerol + H(+). In terms of biological role, bacterial hemolysins are exotoxins that attack blood cell membranes and cause cell rupture. Binds to eukaryotic membranes where it hydrolyzes phosphatidylcholine, sphingomyelin and phosphatidylethanolamine. The diacylglycerol produced can activate both the arachidonic acid pathway, leading to modulation of the inflammatory response cascade and thrombosis, and protein kinase C, leading to activation of eukaryotic phospholipases and further membrane damage. This is Phospholipase C (plc) from Clostridium haemolyticum.